The primary structure comprises 234 residues: MERGGFHGYRKLSVNNTTPSPPGLAANFLMAEGSMRPPEFNQPNKTSNGGEEECTVREQDRFMPIANVIRIMRRILPAHAKISDDSKETIQECVSEYISFITGEANERCQREQRKTITAEDVLWAMSKLGFDDYIEPLTLYLHRYRELEGERGVSCSAGSVSMTNGLVVKRPNGTMTEYGAYGPVPGIHMAQYHYRHQNGFVFSGNEPNSKMSGSSSGASGARVEVFPTQQHKY.

Disordered stretches follow at residues 1–21 and 35–55; these read MERG…TPSP and MRPP…EECT. A DNA-binding region spans residues 63–69; the sequence is MPIANVI. The tract at residues 90–101 is subunit association domain (SAD); sequence IQECVSEYISFI. The interval 206-234 is disordered; it reads NEPNSKMSGSSSGASGARVEVFPTQQHKY. A compositionally biased stretch (low complexity) spans 213-222; sequence SGSSSGASGA.

The protein belongs to the NFYB/HAP3 subunit family. In terms of assembly, heterotrimeric transcription factor composed of three components, NF-YA, NF-YB and NF-YC. NF-YB and NF-YC must interact and dimerize for NF-YA association and DNA binding. Interacts with PRN1. Binds directly with DPB3-1. Expressed in roots, flowers and developing siliques. Present in etiolated seedlings.

The protein localises to the nucleus. Functionally, component of the NF-Y/HAP transcription factor complex. The NF-Y complex stimulates the transcription of various genes by recognizing and binding to a CCAAT motif in promoters. Plays a role in the regulation of the embryogenesis. Involved in the abscisic acid (ABA) signaling pathway. The polypeptide is Nuclear transcription factor Y subunit B-6 (Arabidopsis thaliana (Mouse-ear cress)).